The sequence spans 396 residues: 1-deoxy-D-xylulose 5-phosphate reductoisomerase (396 aa).

The NADPH site is built by T17, G18, S19, I20, N47, and N130. K131 serves as a coordination point for 1-deoxy-D-xylulose 5-phosphate. Residue E132 coordinates NADPH. Residue D156 participates in Mn(2+) binding. S157, E158, S182, and H205 together coordinate 1-deoxy-D-xylulose 5-phosphate. E158 is a binding site for Mn(2+). G211 lines the NADPH pocket. The 1-deoxy-D-xylulose 5-phosphate site is built by S218, N223, K224, and E227. E227 contacts Mn(2+).

It belongs to the DXR family. Requires Mg(2+) as cofactor. Mn(2+) is required as a cofactor.

The enzyme catalyses 2-C-methyl-D-erythritol 4-phosphate + NADP(+) = 1-deoxy-D-xylulose 5-phosphate + NADPH + H(+). It participates in isoprenoid biosynthesis; isopentenyl diphosphate biosynthesis via DXP pathway; isopentenyl diphosphate from 1-deoxy-D-xylulose 5-phosphate: step 1/6. Its function is as follows. Catalyzes the NADPH-dependent rearrangement and reduction of 1-deoxy-D-xylulose-5-phosphate (DXP) to 2-C-methyl-D-erythritol 4-phosphate (MEP). This Rhizobium etli (strain CIAT 652) protein is 1-deoxy-D-xylulose 5-phosphate reductoisomerase.